Here is a 910-residue protein sequence, read N- to C-terminus: Alanine--tRNA ligase (910 aa).

Residues 488–505 (RHEEKKEDSKSEKGENTA) are compositionally biased toward basic and acidic residues. The segment at 488–507 (RHEEKKEDSKSEKGENTAEK) is disordered. Zn(2+) is bound by residues H614, H618, C718, and H722.

Belongs to the class-II aminoacyl-tRNA synthetase family. It depends on Zn(2+) as a cofactor.

The protein localises to the cytoplasm. It carries out the reaction tRNA(Ala) + L-alanine + ATP = L-alanyl-tRNA(Ala) + AMP + diphosphate. Its function is as follows. Catalyzes the attachment of alanine to tRNA(Ala) in a two-step reaction: alanine is first activated by ATP to form Ala-AMP and then transferred to the acceptor end of tRNA(Ala). Also edits incorrectly charged Ser-tRNA(Ala) and Gly-tRNA(Ala) via its editing domain. The sequence is that of Alanine--tRNA ligase from Methanococcus aeolicus (strain ATCC BAA-1280 / DSM 17508 / OCM 812 / Nankai-3).